Reading from the N-terminus, the 146-residue chain is Leghemoglobin Lb120-1 (146 aa).

The 145-residue stretch at 2–146 (GFTEKQEALV…LASAIKKAMN (145 aa)) folds into the Globin domain. Nitrated tyrosine occurs at positions 24 and 29. Ser-44 is a heme b binding site. Position 44 is a phosphoserine (Ser-44). His-61 contributes to the O2 binding site. The heme b site is built by Lys-64, His-93, and Lys-96. Tyr-134 bears the Nitrated tyrosine mark.

It belongs to the plant globin family. As to quaternary structure, monomer. Nitrated in effective nodules and particularly in hypoxic conditions; this mechanism may play a protective role in the symbiosis by buffering toxic peroxynitrite NO(2)(-). Nitration level decrease during nodule senescence. Post-translationally, phosphorylation at Ser-44 disrupts the molecular environment of its porphyrin ring oxygen binding pocket, thus leading to a reduced oxygen consumption and to the delivery of oxygen O(2) to symbiosomes. Root nodules.

The protein localises to the cytoplasm. Its subcellular location is the cytosol. The protein resides in the nucleus. Functionally, leghemoglobin that reversibly binds oxygen O(2) through a pentacoordinated heme iron. In root nodules, facilitates the diffusion of oxygen to the bacteroids while preventing the bacterial nitrogenase from being inactivated by buffering dioxygen, nitric oxide and carbon monoxide, and promoting the formation of reactive oxygen species (ROS, e.g. H(2)O(2)). This role is essential for symbiotic nitrogen fixation (SNF). The sequence is that of Leghemoglobin Lb120-1 from Pisum sativum (Garden pea).